The chain runs to 22 residues: Melittin-related peptide FQ-22-1 (22 aa).

Gln22 is modified (glutamine amide).

Expressed by the skin glands.

The protein localises to the secreted. This is Melittin-related peptide FQ-22-1 from Rana arvalis (Moor frog).